The sequence spans 449 residues: GPI mannosyltransferase 2 (449 aa).

At 1-7 (MTEKVTK) the chain is on the cytoplasmic side. Residues 8–28 (LALASRLIVLLVQLVANGALP) form a helical membrane-spanning segment. Over 29-82 (EHKPDVFRMPVSSDQNASWIDKVIKRCLGGLRHWDGEYFLHIAENLYSYENTLA) the chain is Lumenal. Residue Asn-44 is glycosylated (N-linked (GlcNAc...) asparagine). The helical transmembrane segment at 83-103 (FYPLYPVVVRHVGQAVEAIGI) threads the bilayer. Over 104–109 (SLSQES) the chain is Cytoplasmic. The helical transmembrane segment at 110–130 (ILLVVAVALNFWLFCESANLL) threads the bilayer. The Lumenal portion of the chain corresponds to 131 to 148 (FQLTQVLFNDLNKSWNAA). A glycan (N-linked (GlcNAc...) asparagine) is linked at Asn-142. Residues 149-169 (LIYCFNPATIFFTAAYSETFF) form a helical membrane-spanning segment. Residues 170–196 (AYSSLHLMLECSKPTGSFRYLRLGTAL) are Cytoplasmic-facing. Residues 197–217 (AACLLCRSNGLITLGYPLYFF) traverse the membrane as a helical segment. Residues 218–235 (GRQLLLKNKEPNTCMQLT) lie on the Lumenal side of the membrane. The chain crosses the membrane as a helical span at residues 236–256 (QMTLTILGAIGILHTYYFYIY). Residues 257-368 (RLYCLPNTRP…GFKELIRDHT (112 aa)) lie on the Cytoplasmic side of the membrane. The chain crosses the membrane as a helical span at residues 369–389 (TFPFVLHAAILTLVCTVYVHI). Residues 390–423 (QVSTRLLASATPVFYWFAADHMPKTLAQLKLRSK) are Lumenal-facing. A helical membrane pass occupies residues 424-444 (AGALFVWCTTYSLVGTVLFSN). Over 445–449 (NYPWT) the chain is Cytoplasmic.

It belongs to the PIGV family.

It localises to the endoplasmic reticulum membrane. The protein operates within glycolipid biosynthesis; glycosylphosphatidylinositol-anchor biosynthesis. Functionally, mannosyltransferase involved in glycosylphosphatidylinositol-anchor biosynthesis. Transfers the second mannose to the glycosylphosphatidylinositol during GPI precursor assembly. Required for the GPI-mediated endoplasmic reticulum exit and proper targeting to the cell surface of chp. Required for GPI-mediated membrane attachment of chp, qsm and Cont. Essential for microvillar stability in the rhabdomere. The sequence is that of GPI mannosyltransferase 2 from Drosophila melanogaster (Fruit fly).